The following is a 61-amino-acid chain: Large ribosomal subunit protein uL30 (61 aa).

This sequence belongs to the universal ribosomal protein uL30 family. In terms of assembly, part of the 50S ribosomal subunit.

The chain is Large ribosomal subunit protein uL30 from Bordetella parapertussis (strain 12822 / ATCC BAA-587 / NCTC 13253).